The primary structure comprises 68 residues: Large ribosomal subunit protein uL29 (68 aa).

Belongs to the universal ribosomal protein uL29 family.

The protein is Large ribosomal subunit protein uL29 of Chloroflexus aurantiacus (strain ATCC 29364 / DSM 637 / Y-400-fl).